A 1149-amino-acid polypeptide reads, in one-letter code: ATP-dependent helicase/deoxyribonuclease subunit B (1149 aa).

An ATP-binding site is contributed by 8–15; that stretch reads GRAGSGKS. [4Fe-4S] cluster-binding residues include Cys-788, Cys-1106, Cys-1109, and Cys-1115.

It belongs to the helicase family. AddB/RexB type 1 subfamily. In terms of assembly, heterodimer of AddA and AddB. Requires Mg(2+) as cofactor. [4Fe-4S] cluster serves as cofactor.

Its function is as follows. The heterodimer acts as both an ATP-dependent DNA helicase and an ATP-dependent, dual-direction single-stranded exonuclease. Recognizes the chi site generating a DNA molecule suitable for the initiation of homologous recombination. The AddB subunit has 5' -&gt; 3' nuclease activity but not helicase activity. The chain is ATP-dependent helicase/deoxyribonuclease subunit B from Ruminiclostridium cellulolyticum (strain ATCC 35319 / DSM 5812 / JCM 6584 / H10) (Clostridium cellulolyticum).